The primary structure comprises 219 residues: UPF0173 metal-dependent hydrolase Mlab_1154 (219 aa).

This sequence belongs to the UPF0173 family.

The chain is UPF0173 metal-dependent hydrolase Mlab_1154 from Methanocorpusculum labreanum (strain ATCC 43576 / DSM 4855 / Z).